The following is a 573-amino-acid chain: 2-succinyl-5-enolpyruvyl-6-hydroxy-3-cyclohexene-1-carboxylate synthase (573 aa).

It belongs to the TPP enzyme family. MenD subfamily. In terms of assembly, homodimer. Requires Mg(2+) as cofactor. The cofactor is Mn(2+). It depends on thiamine diphosphate as a cofactor.

It catalyses the reaction isochorismate + 2-oxoglutarate + H(+) = 5-enolpyruvoyl-6-hydroxy-2-succinyl-cyclohex-3-ene-1-carboxylate + CO2. Its pathway is quinol/quinone metabolism; 1,4-dihydroxy-2-naphthoate biosynthesis; 1,4-dihydroxy-2-naphthoate from chorismate: step 2/7. It functions in the pathway quinol/quinone metabolism; menaquinone biosynthesis. In terms of biological role, catalyzes the thiamine diphosphate-dependent decarboxylation of 2-oxoglutarate and the subsequent addition of the resulting succinic semialdehyde-thiamine pyrophosphate anion to isochorismate to yield 2-succinyl-5-enolpyruvyl-6-hydroxy-3-cyclohexene-1-carboxylate (SEPHCHC). This is 2-succinyl-5-enolpyruvyl-6-hydroxy-3-cyclohexene-1-carboxylate synthase from Shewanella baltica (strain OS185).